We begin with the raw amino-acid sequence, 2890 residues long: Bifunctional DNA-directed RNA polymerase subunit beta-beta' (2890 aa).

Residues methionine 1–aspartate 1377 are DNA-directed RNA polymerase subunit beta. The segment at proline 1384 to phenylalanine 2890 is DNA-directed RNA polymerase subunit beta'. Positions 1449, 1451, 1465, and 1468 each coordinate Zn(2+). Positions 1849, 1851, and 1853 each coordinate Mg(2+). Zn(2+) is bound by residues cysteine 2179, cysteine 2253, cysteine 2260, and cysteine 2263.

It in the N-terminal section; belongs to the RNA polymerase beta chain family. The protein in the C-terminal section; belongs to the RNA polymerase beta' chain family. In terms of assembly, the RNAP catalytic core consists of 2 alpha, 1 beta/beta' and 1 omega subunit. When a sigma factor is associated with the core the holoenzyme is formed, which can initiate transcription. Requires Mg(2+) as cofactor. Zn(2+) serves as cofactor.

The catalysed reaction is RNA(n) + a ribonucleoside 5'-triphosphate = RNA(n+1) + diphosphate. In terms of biological role, DNA-dependent RNA polymerase catalyzes the transcription of DNA into RNA using the four ribonucleoside triphosphates as substrates. The protein is Bifunctional DNA-directed RNA polymerase subunit beta-beta' (rpoBC) of Helicobacter pylori (strain Shi470).